The chain runs to 510 residues: MPNRCDFCTSSSTKDKQQWTQCDGCDRWVHDVCVSITDPVSYAKYHCPTCTKTKGPSLYKRQSKRKKIDIDYAAMHSGNVDMSLRTRHVHSSRFTDVAASAQNKEPFKRVSGTELTLDWAQSSDGLNEPVIVPKEYKDTLGMYIPEDLTVRQVAEAVGMESPVEVINVVSQNGSPGWNMGKWTEYYEDIEGRDTILNVISLEISASALGKTIVRPTLVRELDLVDRVWPTNTDAARESKPRVSLYALMSVEDSFTDFHIDFAGSSVFYHVLKGRKSFMFIRPTARNLAAYSQWCLSADQNVVFLPDVLSPDSDIYTVHLSPGDTMYIPSGWIHAVHSPQDSLVVGGNFITPLNMKTQIDIAGIEVRTKVPMKFRYPLFAGVMWYYVLQLLANPERLNTMSTKERDGLNSVAEYLSGFIKTMSPTMKDVQYRRFVANFPMEIRPFPGKTLLDYCAMLDFYPKGVQETVDIDIRKKKGESKEKHKIESQLPEEKILQGSKLESKEEVQTENF.

A PHD-type zinc finger spans residues 2 to 53; that stretch reads PNRCDFCTSSSTKDKQQWTQCDGCDRWVHDVCVSITDPVSYAKYHCPTCTKT. One can recognise a JmjC domain in the interval 216-365; that stretch reads TLVRELDLVD…TQIDIAGIEV (150 aa). Position 255 (Thr-255) interacts with substrate. Positions 258 and 260 each coordinate Fe cation. Lys-275 is a substrate binding site. Residue His-333 coordinates Fe cation. The disordered stretch occupies residues 475-510; it reads KGESKEKHKIESQLPEEKILQGSKLESKEEVQTENF. Basic and acidic residues predominate over residues 477-510; sequence ESKEKHKIESQLPEEKILQGSKLESKEEVQTENF.

The protein belongs to the JHDM1 histone demethylase family. It depends on Fe(2+) as a cofactor.

It localises to the nucleus. The enzyme catalyses N(6),N(6)-dimethyl-L-lysyl(36)-[histone H3] + 2 2-oxoglutarate + 2 O2 = L-lysyl(36)-[histone H3] + 2 formaldehyde + 2 succinate + 2 CO2. Histone demethylase that specifically demethylates 'Lys-36' of histone H3, thereby playing a central role in histone code. This chain is JmjC domain-containing histone demethylation protein 1 (JHD1), found in Yarrowia lipolytica (strain CLIB 122 / E 150) (Yeast).